The chain runs to 340 residues: Erlin-2 (340 aa).

The Cytoplasmic portion of the chain corresponds to 1 to 3 (MAQ). A helical membrane pass occupies residues 4–24 (LGAVVAVASSFFCASLFSAVH). The Lumenal segment spans residues 25–340 (KIEEGHIGVY…EPLEAPTKEN (316 aa)). N-linked (GlcNAc...) asparagine glycosylation is present at asparagine 106. Residues 177 to 309 (EAIRRNYELM…DIPNMFMDSA (133 aa)) form an interaction with ERLIN1 region. Lysine 267 is subject to N6-acetyllysine.

It belongs to the band 7/mec-2 family. As to quaternary structure, forms a heteromeric complex with ERLIN1. In complex with ERLIN1, interacts with RNF170. Interacts with activated ITPR1, independently of the degree of ITPR1 polyubiquitination. Interacts with SCAP, INSIG1, SREBF1 and SREBF2 under cholesterol sufficiency conditions; indicative for an association with the SCAP-SREBP-INSIG complex. Probably part of an AMFR/gp78 and INSIG1-containing ubiquitin ligase complex involved in ERAD of HMGCR. Interacts with TMUB1; TMUB1 bridges the association with AMFR. Interacts with SYVN1 and RNF139. Interacts with TMEM259. Interacts with TMEM41B. Post-translationally, deubiquitinated by USP25; leading to stabilization.

The protein localises to the endoplasmic reticulum membrane. In terms of biological role, component of the ERLIN1/ERLIN2 complex which mediates the endoplasmic reticulum-associated degradation (ERAD) of inositol 1,4,5-trisphosphate receptors (IP3Rs) such as ITPR1. Promotes sterol-accelerated ERAD of HMGCR probably implicating an AMFR/gp78-containing ubiquitin ligase complex. Involved in regulation of cellular cholesterol homeostasis by regulation the SREBP signaling pathway. May promote ER retention of the SCAP-SREBF complex. This chain is Erlin-2 (Erlin2), found in Mus musculus (Mouse).